We begin with the raw amino-acid sequence, 533 residues long: Beta-1,4 N-acetylgalactosaminyltransferase 1 (533 aa).

Residues 1–7 lie on the Cytoplasmic side of the membrane; that stretch reads MRLDRRA. Residues 8–25 form a helical; Signal-anchor for type II membrane protein membrane-spanning segment; that stretch reads LYALVLLLACASLGLLYA. Residues 26–533 are Lumenal-facing; that stretch reads STRDAPGLPN…KHRLQCMTAE (508 aa). N-linked (GlcNAc...) asparagine glycans are attached at residues Asn79 and Asn274. Cys429 and Cys476 are joined by a disulfide.

It belongs to the glycosyltransferase 2 family. In terms of assembly, homodimer; disulfide-linked. As to expression, strongly expressed in brain, testis, spleen, and to a lesser extent in liver.

The protein localises to the golgi apparatus membrane. It catalyses the reaction a ganglioside GM3 (d18:1(4E)) + UDP-N-acetyl-alpha-D-galactosamine = a ganglioside GM2 (d18:1(4E)) + UDP + H(+). It carries out the reaction a ganglioside GD3 (d18:1(4E)) + UDP-N-acetyl-alpha-D-galactosamine = a ganglioside GD2 (d18:1(4E)) + UDP + H(+). The catalysed reaction is a ganglioside GM3 + UDP-N-acetyl-alpha-D-galactosamine = a ganglioside GM2 + UDP + H(+). The enzyme catalyses a ganglioside GD3 + UDP-N-acetyl-alpha-D-galactosamine = a ganglioside GD2 + UDP + H(+). It catalyses the reaction a ganglioside GD1a + UDP-N-acetyl-alpha-D-galactosamine = a ganglioside GalNAc-GD1a + UDP + H(+). It carries out the reaction a ganglioside GT3 (d18:1(4E)) + UDP-N-acetyl-alpha-D-galactosamine = a ganglioside GT2 (d18:1(4E)) + UDP + H(+). The catalysed reaction is a beta-D-Gal-(1-&gt;4)-beta-D-Glc-(1&lt;-&gt;1)-Cer(d18:1(4E)) + UDP-N-acetyl-alpha-D-galactosamine = a ganglioside GA2 (d18:1(4E)) + UDP + H(+). The enzyme catalyses a neolactoside IV(3)-alpha-NeuGc-nLc4Cer + UDP-N-acetyl-alpha-D-galactosamine = a neolactoside IV(4)-beta-GalNAc-IV(3)-alpha-NeuGc-nLc4Cer + UDP + H(+). It participates in sphingolipid metabolism. In terms of biological role, involved in the biosynthesis of gangliosides GM2, GD2, GT2 and GA2 from GM3, GD3, GT3 and GA3, respectively. The chain is Beta-1,4 N-acetylgalactosaminyltransferase 1 from Rattus norvegicus (Rat).